A 275-amino-acid polypeptide reads, in one-letter code: Lycopene elongase/hydratase (275 aa).

A run of 9 helical transmembrane segments spans residues 13 to 33 (FWLY…TTVG), 38 to 58 (APAV…LYGI), 84 to 104 (AAVA…AAPL), 107 to 127 (EAWP…APPL), 134 to 154 (VLDS…YAGV), 160 to 180 (PLLA…FSAI), 203 to 223 (ALAY…LVDV), 225 to 245 (FGLL…LQVA), and 253 to 273 (YPAV…WGVV).

This sequence belongs to the UbiA prenyltransferase family.

The protein resides in the cell membrane. The enzyme catalyses all-trans-lycopene + dimethylallyl diphosphate + H2O = dihydroisopentenyldehydrorhodopin + diphosphate. The catalysed reaction is isopentenyldehydrorhodopin + dimethylallyl diphosphate + H2O = dihydrobisanhydrobacterioruberin + diphosphate. The protein operates within carotenoid biosynthesis. Inhibited by bacterioopsin. Functionally, involved in the biosynthesis of the acyclic C50 carotenoid bacterioruberin (BR). Acts as a bifunctional elongase/hydratase that catalyzes the elongation of lycopene by attaching a C(5) isoprene unit at C-2, as well as the hydroxylation of the previous end of the molecule. The enzyme acts at both ends of the substrate, and catalyzes the conversion of lycopene to the C(45) intermediate dihydroisopentenyldehydrorhodopin (DH-IDR) and the conversion of isopentenyldehydrorhodopin (IDR) to the C(50) carotenoid dihydrobisanhydrobacterioruberin (DH-BABR). Can also catalyze the conversion of lycopene to tetrahydrobisanhydrobacterioruberin (TH-BABR). This chain is Lycopene elongase/hydratase, found in Halobacterium salinarum (strain ATCC 700922 / JCM 11081 / NRC-1) (Halobacterium halobium).